The following is a 395-amino-acid chain: Forkhead box protein I3 (395 aa).

The segment at residues 131–225 (RPPYSYSALI…DNGNFRRKRK (95 aa)) is a DNA-binding region (fork-head). Disordered stretches follow at residues 216 to 288 (DNGN…GIIS) and 322 to 370 (RNFS…SSGS). A Nuclear localization signal motif is present at residues 221-227 (RRKRKRR). Residues 234–245 (ATTAAASSLGGL) show a composition bias toward low complexity. Polar residues predominate over residues 325–335 (SAGQLSGGTFT). The segment covering 336–349 (PSSSSSQEVPSPEQ) has biased composition (low complexity).

Initially expressed in the pre-placodal ectoderm surrounding the neural plate, which will give rise to all craniofacial sensory organs. Expression then becomes restricted to a region immediately anterior to the first pair of somites that will give rise to the otic and epibranchial placodes, before becoming down-regulated from this region and restricted to the ectoderm and endoderm of the pharyngeal arches.

The protein resides in the nucleus. Transcription factor required for pharyngeal arch development, which is involved in otic placode development. The sequence is that of Forkhead box protein I3 from Gallus gallus (Chicken).